A 176-amino-acid polypeptide reads, in one-letter code: Peptide methionine sulfoxide reductase MsrA (176 aa).

The active site involves C10.

The protein belongs to the MsrA Met sulfoxide reductase family.

It catalyses the reaction L-methionyl-[protein] + [thioredoxin]-disulfide + H2O = L-methionyl-(S)-S-oxide-[protein] + [thioredoxin]-dithiol. The catalysed reaction is [thioredoxin]-disulfide + L-methionine + H2O = L-methionine (S)-S-oxide + [thioredoxin]-dithiol. Has an important function as a repair enzyme for proteins that have been inactivated by oxidation. Catalyzes the reversible oxidation-reduction of methionine sulfoxide in proteins to methionine. This Leptospira borgpetersenii serovar Hardjo-bovis (strain L550) protein is Peptide methionine sulfoxide reductase MsrA.